The primary structure comprises 465 residues: Amino-acid carrier protein AlsT (465 aa).

The next 10 membrane-spanning stretches (helical) occupy residues 20–40 (LFYI…FIQF), 82–102 (VALA…VVAA), 142–162 (WLGI…FNAV), 177–197 (VNKI…IFGG), 208–228 (IVPV…ITNI), 241–261 (NALG…VIGA), 296–316 (LGVF…ILLY), 336–356 (IGGW…FSSV), 382–402 (IAVI…VWDM), and 405–425 (LFMG…SNVA).

The protein belongs to the alanine or glycine:cation symporter (AGCS) (TC 2.A.25) family.

The protein localises to the cell membrane. This is Amino-acid carrier protein AlsT (alsT) from Bacillus subtilis (strain 168).